The primary structure comprises 456 residues: Argininosuccinate lyase (456 aa).

It belongs to the lyase 1 family. Argininosuccinate lyase subfamily.

Its subcellular location is the cytoplasm. It carries out the reaction 2-(N(omega)-L-arginino)succinate = fumarate + L-arginine. It participates in amino-acid biosynthesis; L-arginine biosynthesis; L-arginine from L-ornithine and carbamoyl phosphate: step 3/3. This is Argininosuccinate lyase from Listeria monocytogenes serotype 4b (strain F2365).